The primary structure comprises 347 residues: N-acetyl-gamma-glutamyl-phosphate reductase (347 aa).

The active site involves Cys152.

This sequence belongs to the NAGSA dehydrogenase family. Type 1 subfamily.

The protein localises to the cytoplasm. The enzyme catalyses N-acetyl-L-glutamate 5-semialdehyde + phosphate + NADP(+) = N-acetyl-L-glutamyl 5-phosphate + NADPH + H(+). It participates in amino-acid biosynthesis; L-arginine biosynthesis; N(2)-acetyl-L-ornithine from L-glutamate: step 3/4. Its function is as follows. Catalyzes the NADPH-dependent reduction of N-acetyl-5-glutamyl phosphate to yield N-acetyl-L-glutamate 5-semialdehyde. The polypeptide is N-acetyl-gamma-glutamyl-phosphate reductase (Neisseria gonorrhoeae (strain ATCC 700825 / FA 1090)).